Consider the following 101-residue polypeptide: Small ribosomal subunit protein uS14 (101 aa).

This sequence belongs to the universal ribosomal protein uS14 family. Part of the 30S ribosomal subunit. Contacts proteins S3 and S10.

Its function is as follows. Binds 16S rRNA, required for the assembly of 30S particles and may also be responsible for determining the conformation of the 16S rRNA at the A site. This is Small ribosomal subunit protein uS14 from Bartonella bacilliformis (strain ATCC 35685 / KC583 / Herrer 020/F12,63).